Reading from the N-terminus, the 206-residue chain is Large ribosomal subunit protein eL13z (206 aa).

The disordered stretch occupies residues Glu183–Lys206. The segment covering Asn186 to Lys195 has biased composition (basic residues). A compositionally biased stretch (basic and acidic residues) spans Arg196–Lys206.

It belongs to the eukaryotic ribosomal protein eL13 family.

This chain is Large ribosomal subunit protein eL13z, found in Brassica napus (Rape).